A 79-amino-acid chain; its full sequence is uncharacterized protein (79 aa).

2 helical membrane-spanning segments follow: residues I18–I38 and G50–F70.

Its subcellular location is the host membrane. This is an uncharacterized protein from Spiroplasma virus SpV1-R8A2 B (SpV1).